Consider the following 130-residue polypeptide: Large ribosomal subunit protein bL19 (130 aa).

The protein belongs to the bacterial ribosomal protein bL19 family.

Functionally, this protein is located at the 30S-50S ribosomal subunit interface and may play a role in the structure and function of the aminoacyl-tRNA binding site. The polypeptide is Large ribosomal subunit protein bL19 (Methylorubrum populi (strain ATCC BAA-705 / NCIMB 13946 / BJ001) (Methylobacterium populi)).